The following is a 285-amino-acid chain: Alginate lyase (285 aa).

Residues 1-20 (MIKSNLVISSLAIVSSMSYA) form the signal peptide.

This sequence belongs to the polysaccharide lyase 6 family.

It carries out the reaction Eliminative cleavage of alginate to give oligosaccharides with 4-deoxy-alpha-L-erythro-hex-4-enuronosyl groups at their non-reducing ends and beta-D-mannuronate at their reducing end.. This is Alginate lyase (alxM) from Photobacterium sp. (strain ATCC 43367).